We begin with the raw amino-acid sequence, 424 residues long: Enolase (424 aa).

Q163 contacts (2R)-2-phosphoglycerate. The Proton donor role is filled by E204. D241, E284, and D311 together coordinate Mg(2+). (2R)-2-phosphoglycerate is bound by residues K336, R365, S366, and K387. K336 functions as the Proton acceptor in the catalytic mechanism.

The protein belongs to the enolase family. Mg(2+) serves as cofactor.

Its subcellular location is the cytoplasm. The protein resides in the secreted. The protein localises to the cell surface. The catalysed reaction is (2R)-2-phosphoglycerate = phosphoenolpyruvate + H2O. Its pathway is carbohydrate degradation; glycolysis; pyruvate from D-glyceraldehyde 3-phosphate: step 4/5. Its function is as follows. Catalyzes the reversible conversion of 2-phosphoglycerate (2-PG) into phosphoenolpyruvate (PEP). It is essential for the degradation of carbohydrates via glycolysis. The polypeptide is Enolase (Dictyoglomus turgidum (strain DSM 6724 / Z-1310)).